A 314-amino-acid chain; its full sequence is Methionyl-tRNA formyltransferase (314 aa).

113-116 (SLLP) is a (6S)-5,6,7,8-tetrahydrofolate binding site.

It belongs to the Fmt family.

It catalyses the reaction L-methionyl-tRNA(fMet) + (6R)-10-formyltetrahydrofolate = N-formyl-L-methionyl-tRNA(fMet) + (6S)-5,6,7,8-tetrahydrofolate + H(+). Its function is as follows. Attaches a formyl group to the free amino group of methionyl-tRNA(fMet). The formyl group appears to play a dual role in the initiator identity of N-formylmethionyl-tRNA by promoting its recognition by IF2 and preventing the misappropriation of this tRNA by the elongation apparatus. The polypeptide is Methionyl-tRNA formyltransferase (Pseudomonas aeruginosa (strain ATCC 15692 / DSM 22644 / CIP 104116 / JCM 14847 / LMG 12228 / 1C / PRS 101 / PAO1)).